The sequence spans 274 residues: Octanoyltransferase LipM (274 aa).

One can recognise a BPL/LPL catalytic domain in the interval 31 to 245; it reads GEVPPTLRLY…GFAEALGARL (215 aa). Cysteine 147 functions as the Acyl-thioester intermediate in the catalytic mechanism.

The protein belongs to the octanoyltransferase LipM family. As to quaternary structure, monomer.

The catalysed reaction is octanoyl-[ACP] + L-lysyl-[protein] = N(6)-octanoyl-L-lysyl-[protein] + holo-[ACP] + H(+). It participates in protein modification; protein lipoylation via endogenous pathway; protein N(6)-(lipoyl)lysine from octanoyl-[acyl-carrier-protein]. Its function is as follows. Catalyzes the transfer of endogenously produced octanoic acid from octanoyl-acyl-carrier-protein onto the lipoyl domain of GcvH, an intermediate carrier during protein lipoylation. This is Octanoyltransferase LipM from Kyrpidia tusciae (strain DSM 2912 / NBRC 15312 / T2) (Bacillus tusciae).